The following is a 45-amino-acid chain: Mu-conotoxin-like Cal 12.1.2g (45 aa).

4 disulfides stabilise this stretch: Cys3–Cys16, Cys11–Cys28, Cys18–Cys33, and Cys27–Cys39. Residue Pro23 is modified to 4-hydroxyproline. Trp37 and Trp38 each carry 6'-bromotryptophan. A 4-hydroxyproline modification is found at Pro40.

In terms of tissue distribution, expressed by the venom duct.

Its subcellular location is the secreted. In terms of biological role, mu-conotoxins block voltage-gated sodium channels. This toxin reversibly blocks voltage-gated sodium channel in cephalopods, with no alteration in the voltage dependence of sodium conductance or on the kinetics of inactivation. In Californiconus californicus (California cone), this protein is Mu-conotoxin-like Cal 12.1.2g.